The following is a 445-amino-acid chain: Argininosuccinate synthase (445 aa).

ATP is bound by residues 17–25 (AFSGGLDTS) and alanine 43. Tyrosine 99 is an L-citrulline binding site. Residues glycine 129 and threonine 131 each coordinate ATP. Residues threonine 131, asparagine 135, and aspartate 136 each coordinate L-aspartate. Asparagine 135 contributes to the L-citrulline binding site. An ATP-binding site is contributed by aspartate 136. Residues arginine 139 and serine 192 each coordinate L-citrulline. Aspartate 194 is an ATP binding site. Positions 201, 203, and 280 each coordinate L-citrulline.

It belongs to the argininosuccinate synthase family. Type 2 subfamily. As to quaternary structure, homotetramer.

The protein resides in the cytoplasm. It carries out the reaction L-citrulline + L-aspartate + ATP = 2-(N(omega)-L-arginino)succinate + AMP + diphosphate + H(+). It functions in the pathway amino-acid biosynthesis; L-arginine biosynthesis; L-arginine from L-ornithine and carbamoyl phosphate: step 2/3. This is Argininosuccinate synthase from Gemmatimonas aurantiaca (strain DSM 14586 / JCM 11422 / NBRC 100505 / T-27).